We begin with the raw amino-acid sequence, 136 residues long: Small ribosomal subunit protein uS9 (136 aa).

Residues 115–136 are disordered; sequence KVKERKKPGLRKARKARQFSKR. Residues 117–136 are compositionally biased toward basic residues; sequence KERKKPGLRKARKARQFSKR.

The protein belongs to the universal ribosomal protein uS9 family.

This Mycoplasmopsis pulmonis (strain UAB CTIP) (Mycoplasma pulmonis) protein is Small ribosomal subunit protein uS9.